The chain runs to 154 residues: 6,7-dimethyl-8-ribityllumazine synthase (154 aa).

5-amino-6-(D-ribitylamino)uracil-binding positions include Phe26, 60-62 (ALE), and 84-86 (CII). Position 89–90 (89–90 (QT)) interacts with (2S)-2-hydroxy-3-oxobutyl phosphate. His92 (proton donor) is an active-site residue. Asn117 contributes to the 5-amino-6-(D-ribitylamino)uracil binding site. Arg131 provides a ligand contact to (2S)-2-hydroxy-3-oxobutyl phosphate.

It belongs to the DMRL synthase family.

It catalyses the reaction (2S)-2-hydroxy-3-oxobutyl phosphate + 5-amino-6-(D-ribitylamino)uracil = 6,7-dimethyl-8-(1-D-ribityl)lumazine + phosphate + 2 H2O + H(+). The protein operates within cofactor biosynthesis; riboflavin biosynthesis; riboflavin from 2-hydroxy-3-oxobutyl phosphate and 5-amino-6-(D-ribitylamino)uracil: step 1/2. Its function is as follows. Catalyzes the formation of 6,7-dimethyl-8-ribityllumazine by condensation of 5-amino-6-(D-ribitylamino)uracil with 3,4-dihydroxy-2-butanone 4-phosphate. This is the penultimate step in the biosynthesis of riboflavin. This is 6,7-dimethyl-8-ribityllumazine synthase from Verminephrobacter eiseniae (strain EF01-2).